The primary structure comprises 1019 residues: Insulin-degrading enzyme (1019 aa).

Zn(2+) is bound at residue histidine 108. Glutamate 111 functions as the Proton acceptor in the catalytic mechanism. Zn(2+) contacts are provided by histidine 112 and glutamate 189. Lysine 192 is subject to N6-succinyllysine. Substrate is bound at residue 359–363 (LVGGQ). Arginine 429 contributes to the ATP binding site. Lysine 697 bears the N6-succinyllysine mark. The SlyX motif signature appears at 853-858 (EKPPHY). Residue 895 to 901 (DKPKKLS) participates in ATP binding.

The protein belongs to the peptidase M16 family. As to quaternary structure, homodimer. Can also form homotetramers. Requires Zn(2+) as cofactor. As to expression, detected in brain and liver (at protein level). Detected in liver.

It localises to the cytoplasm. The protein localises to the cytosol. The protein resides in the cell membrane. Its subcellular location is the secreted. The enzyme catalyses Degradation of insulin, glucagon and other polypeptides. No action on proteins.. Activated by ATP, other nucleotide triphosphates and small peptides. Inhibited by bacitracin. In terms of biological role, plays a role in the cellular breakdown of insulin, APP peptides, IAPP peptides, natriuretic peptides, glucagon, bradykinin, kallidin, and other peptides, and thereby plays a role in intercellular peptide signaling. Substrate binding induces important conformation changes, making it possible to bind and degrade larger substrates, such as insulin. Contributes to the regulation of peptide hormone signaling cascades and regulation of blood glucose homeostasis via its role in the degradation of insulin, glucagon and IAPP. Plays a role in the degradation and clearance of APP-derived amyloidogenic peptides that are secreted by neurons and microglia. Degrades the natriuretic peptides ANP, BNP and CNP, inactivating their ability to raise intracellular cGMP. Also degrades an aberrant frameshifted 40-residue form of NPPA (fsNPPA) which is associated with familial atrial fibrillation in heterozygous patients. Involved in antigen processing. Produces both the N terminus and the C terminus of MAGEA3-derived antigenic peptide (EVDPIGHLY) that is presented to cytotoxic T lymphocytes by MHC class I. This Mus musculus (Mouse) protein is Insulin-degrading enzyme (Ide).